The sequence spans 633 residues: Chaperone protein dnaK2 (633 aa).

Phosphothreonine; by autocatalysis is present on T196. The segment at 600–633 (ATADGGPAQHAATGGPTSGGGGGDDVIDAEFDKG) is disordered. The span at 624-633 (DVIDAEFDKG) shows a compositional bias: acidic residues.

Belongs to the heat shock protein 70 family.

Its function is as follows. Acts as a chaperone. The chain is Chaperone protein dnaK2 (dnaK2) from Streptomyces avermitilis (strain ATCC 31267 / DSM 46492 / JCM 5070 / NBRC 14893 / NCIMB 12804 / NRRL 8165 / MA-4680).